Consider the following 139-residue polypeptide: Maximins 4/H3 type 6 (139 aa).

A signal peptide spans 1–18 (MNFKYIVAVSFLIASAYA). A propeptide spanning residues 19–43 (RSVQNDEQSLSQRDVLEEESLREIR) is cleaved from the precursor. Asparagine amide is present on asparagine 70. Positions 74–118 (TAEDHEVMKRLEAVMRDLDSLDHPEEASERETRGFNQDEIAKEKR) are excised as a propeptide. Isoleucine 138 is subject to Isoleucine amide.

This sequence belongs to the bombinin family. In terms of tissue distribution, expressed by the skin glands.

Its subcellular location is the secreted. In terms of biological role, maximin-4 shows antibacterial activity against both Gram-positive and Gram-negative bacteria. It also shows antimicrobial activity against the fungus C.albicans, but not against A.flavus nor P.uticale. It has little hemolytic activity. It does not possess a significant cytotoxicity against tumor cell lines. It does not possess a significant anti-HIV activity. Functionally, maximin-H3 shows antibacterial activity against both Gram-positive and Gram-negative bacteria. It also shows antimicrobial activity against the fungus C.albicans. Shows strong hemolytic activity. In Bombina maxima (Giant fire-bellied toad), this protein is Maximins 4/H3 type 6.